A 723-amino-acid polypeptide reads, in one-letter code: Hypoxia-inducible factor prolyl hydroxylase (723 aa).

Residues Cys-39, Cys-42, Cys-54, Cys-57, Cys-63, His-67, His-75, and Cys-79 each contribute to the Zn(2+) site. An MYND-type; atypical zinc finger spans residues 39–79 (CTYCGSSCTSSQLQTCLFCGTVAYCSKEHQQLDWLTHKMIC). Residues 249-270 (PSTASTATIPPPATTTSSATSS) show a composition bias toward low complexity. 2 disordered regions span residues 249-275 (PSTA…KSET) and 294-323 (IETE…KINY). Residues 468–566 (GRSRAMLAIY…RFAITIWYMD (99 aa)) form the Fe2OG dioxygenase domain. The Fe cation site is built by His-487, Asp-489, and His-548. Arg-557 is a 2-oxoglutarate binding site. Positions 678 to 723 (RTTSLQSISDHFRSERSHERRSSTSSDQDLDEGLPPPPSTNPEYYI) are disordered. Positions 687–699 (DHFRSERSHERRS) are enriched in basic and acidic residues.

As to quaternary structure, interacts (via catalytic domain) with lin-10 (via N-terminus); the interaction regulates lin-10 subcellular localization; the interaction is direct. Interacts (via catalytic domain) with swan-1 (via WD 1-3 repeats); the interaction may regulate vhl-1-independent hif-1 transcriptional activity; the interaction is direct. Interacts (via C-terminus) with cysl-1; the interaction is enhanced by hydrogen disulfide and activates hif-1-mediated transcription; the interaction is direct. Fe(2+) is required as a cofactor. It depends on L-ascorbate as a cofactor. In larvae and adults, expressed in pharyngeal and body wall muscles.

The protein resides in the cytoplasm. Its subcellular location is the nucleus. It localises to the cell projection. The protein localises to the dendrite. It is found in the axon. It catalyses the reaction L-prolyl-[hypoxia-inducible factor alpha subunit] + 2-oxoglutarate + O2 = trans-4-hydroxy-L-prolyl-[hypoxia-inducible factor alpha subunit] + succinate + CO2. Its activity is regulated as follows. Inhibited by Co(2+) and dimethyloxalylglycine. Inhibited by the iron chelator 2, 2'-dipyridyl. Functionally, cellular oxygen sensor which regulates the stability and the activity of hypoxia-inducible transcription factor, hif-1. In normoxic conditions, hydroxylates hif-1 targeting it for vhl-1-mediated proteasomal degradation. In addition, regulates hif-1 transcriptional activity in a vhl-1-independent manner and independently of its hydroxylase activity. By regulating hif-1 activity, controls several cellular responses. Mediates susceptibility to B.thuringiensis and V.cholerae pore-forming toxins and enteropathogenic E.coli. Mediates susceptibility to P.aeruginosa PAO1-mediated killing by regulating resistance to cyanide produced by P.aeruginosa. Mediates resistance to S.aureus-mediated killing. In addition, plays a role in heat acclimation, neuronal development, behavioral responses to reoxygenation and hydrogen sulfide, iron homeostasis and aging. In neurons, involved in mitochondrion fusion during reoxygenation. Involved in egg laying. Its function is as follows. Regulates the trafficking of the glutamate receptor glr-1, probably independently of hif-1, by regulating lin-10 subcellular localization in response to oxygen levels. May hydroxylate lin-10. The protein is Hypoxia-inducible factor prolyl hydroxylase of Caenorhabditis elegans.